The chain runs to 223 residues: Putative NAD(P)H nitroreductase SAUSA300_2462 (223 aa).

The protein belongs to the nitroreductase family. FMN is required as a cofactor.

The sequence is that of Putative NAD(P)H nitroreductase SAUSA300_2462 from Staphylococcus aureus (strain USA300).